The following is a 311-amino-acid chain: L-lactate dehydrogenase 2 (311 aa).

NAD(+) is bound by residues Val14, Asp35, and Arg40. A substrate-binding site is contributed by Arg90. Residues Ser103, 120–122, and Thr145 contribute to the NAD(+) site; that span reads ATN. 122–125 serves as a coordination point for substrate; it reads NPCD. Position 150–153 (150–153) interacts with substrate; the sequence is DTTR. The active-site Proton acceptor is His177. Thr230 lines the substrate pocket.

Belongs to the LDH/MDH superfamily. LDH family. As to quaternary structure, homotetramer.

It is found in the cytoplasm. It catalyses the reaction (S)-lactate + NAD(+) = pyruvate + NADH + H(+). Its pathway is fermentation; pyruvate fermentation to lactate; (S)-lactate from pyruvate: step 1/1. Its function is as follows. Catalyzes the conversion of lactate to pyruvate. In Listeria innocua serovar 6a (strain ATCC BAA-680 / CLIP 11262), this protein is L-lactate dehydrogenase 2.